A 369-amino-acid polypeptide reads, in one-letter code: Capsid protein (369 aa).

It is found in the host nucleus. It localises to the virion. Its function is as follows. Self-assembles to form the virion icosahedral capsid. The sequence is that of Capsid protein from Avon-Heathcote Estuary associated kieseladnavirus (AHEaBV).